The following is a 250-amino-acid chain: NADH-quinone oxidoreductase subunit B 2 (250 aa).

Positions 41, 42, 107, and 137 each coordinate [4Fe-4S] cluster.

This sequence belongs to the complex I 20 kDa subunit family. As to quaternary structure, NDH-1 is composed of 14 different subunits. Subunits NuoB, C, D, E, F, and G constitute the peripheral sector of the complex. [4Fe-4S] cluster serves as cofactor.

Its subcellular location is the cell membrane. It catalyses the reaction a quinone + NADH + 5 H(+)(in) = a quinol + NAD(+) + 4 H(+)(out). In terms of biological role, NDH-1 shuttles electrons from NADH, via FMN and iron-sulfur (Fe-S) centers, to quinones in the respiratory chain. The immediate electron acceptor for the enzyme in this species is believed to be ubiquinone. Couples the redox reaction to proton translocation (for every two electrons transferred, four hydrogen ions are translocated across the cytoplasmic membrane), and thus conserves the redox energy in a proton gradient. The polypeptide is NADH-quinone oxidoreductase subunit B 2 (Herpetosiphon aurantiacus (strain ATCC 23779 / DSM 785 / 114-95)).